Consider the following 192-residue polypeptide: Ion-translocating oxidoreductase complex subunit A (192 aa).

Transmembrane regions (helical) follow at residues Leu-5–Leu-25, Ile-39–Val-59, Leu-65–Val-85, Ala-102–Leu-122, Ala-134–Met-154, and Ala-171–Val-191.

It belongs to the NqrDE/RnfAE family. In terms of assembly, the complex is composed of six subunits: RnfA, RnfB, RnfC, RnfD, RnfE and RnfG.

The protein localises to the cell inner membrane. Functionally, part of a membrane-bound complex that couples electron transfer with translocation of ions across the membrane. In Shewanella sp. (strain ANA-3), this protein is Ion-translocating oxidoreductase complex subunit A.